The chain runs to 568 residues: MSKNLLTFEDVSVNFTQEEWQWLSDTQRDLYRKVTLENYKSLVSLGIPVYKPAVISLLEQGKDPWMVQKKGARDTCPDWQYVFKGTEFISKQDIYKESAKVLTMGRSHFSSSLDCPDLKEDHENEDWFKNRLGRQEVHSHQLFITHKEVPESEIRGCNPSCQAVHQNAILDVPQCSSTKERIDQSEPQKRSYRKKSVEMKHKKVQVEKRILKCSECEKVFNQTSSLTLHQRIHTGEKPYACVECGKAFSQSANLAQHKRIHTGEKPYECKECRKAFSQNAHLAQHQRVHTGEKPYQCKECKKAFSQIAHLTQHQRIHTGERPFECIECGKAFSNGSFLAQHQRIHTGEKPYVCHVCGKAFSHRGYLIVHQRIHTGERPYECKECRKSFSQYAHLSQHQRVHTGEKPYECKVCRKAFSQVAYLDQHQRVHTGEKPYECAECRKAFSNSSSLAQHQRSHTGEKPYICKECRKTFSQNAGLAQHQRIHTGEKPYECNICGKAFSYSGSLTLHQRIHTGERPYECKDCRKSFRQRAHLAHHEKVHTMESFLSLSSPSPSMSSQLPRTLGLIS.

One can recognise a KRAB domain in the interval 6–77; sequence LTFEDVSVNF…QKKGARDTCP (72 aa). 12 C2H2-type zinc fingers span residues 211-233, 239-261, 267-289, 295-317, 323-345, 351-373, 379-401, 407-429, 435-457, 463-485, 491-513, and 519-541; these read LKCSECEKVFNQTSSLTLHQRIH, YACVECGKAFSQSANLAQHKRIH, YECKECRKAFSQNAHLAQHQRVH, YQCKECKKAFSQIAHLTQHQRIH, FECIECGKAFSNGSFLAQHQRIH, YVCHVCGKAFSHRGYLIVHQRIH, YECKECRKSFSQYAHLSQHQRVH, YECKVCRKAFSQVAYLDQHQRVH, YECAECRKAFSNSSSLAQHQRSH, YICKECRKTFSQNAGLAQHQRIH, YECNICGKAFSYSGSLTLHQRIH, and YECKDCRKSFRQRAHLAHHEKVH.

It belongs to the krueppel C2H2-type zinc-finger protein family.

Its subcellular location is the nucleus. May be involved in transcriptional regulation. The sequence is that of Zinc finger protein 583 (Znf583) from Mus musculus (Mouse).